The sequence spans 287 residues: Xyloglucan endotransglucosylase protein 1 (287 aa).

An N-terminal signal peptide occupies residues 1-28; the sequence is MAFMSFINGFSTLFLVALLASSMMAAKG. The GH16 domain maps to 29 to 219; the sequence is GNFYQDFDVT…WTKAPFTAYY (191 aa). E105 acts as the Nucleophile in catalysis. E109 serves as the catalytic Proton donor. Position 109 (E109) interacts with xyloglucan. The N-linked (GlcNAc...) asparagine glycan is linked to N113. Xyloglucan is bound by residues 122 to 124, 132 to 134, 198 to 199, and G203; these read HTN, NRE, and DW. 2 disulfides stabilise this stretch: C227/C231 and C266/C280. R271 contacts xyloglucan.

It belongs to the glycosyl hydrolase 16 family. XTH group 2 subfamily. Post-translationally, contains at least one intrachain disulfide bond essential for its enzymatic activity. As to expression, expressed in fruit pulp. Expressed in leaves, flowers, calyces, stems and fruits. Highest expression in leaves and lowest in fruits.

It localises to the secreted. Its subcellular location is the cell wall. It is found in the extracellular space. The protein localises to the apoplast. It catalyses the reaction breaks a beta-(1-&gt;4) bond in the backbone of a xyloglucan and transfers the xyloglucanyl segment on to O-4 of the non-reducing terminal glucose residue of an acceptor, which can be a xyloglucan or an oligosaccharide of xyloglucan.. Catalyzes xyloglucan endotransglycosylation (XET). Cleaves and religates xyloglucan polymers. Does not catalyze xyloglucan endohydrolysis (XEH). Overexpression in Arabidopsis transgenic plants results in elevated tolerance to abiotic stress, such as salt, ABA (abscisic acid) and drought stresses, and in the production of wider leaves. Overexpression in transgenic tomato plants slows down fruit ripening and softening, and the plants produce larger fruits. Both transgenic plants have larger and more irregular cells. Moreover, the fruits of the transgenic tomato have higher density of cell wall and intercellular spaces. May provide cells with more strength and thickness to maintain structural integrity. Probably involved in cell wall assembly and synthesis in fast growing tissues and in the maintenance of firmness in mature fruits. The polypeptide is Xyloglucan endotransglucosylase protein 1 (Diospyros kaki (Kaki persimmon)).